We begin with the raw amino-acid sequence, 396 residues long: Acetylornithine aminotransferase 2 (396 aa).

Pyridoxal 5'-phosphate is bound by residues 102-103 (GA) and phenylalanine 134. Arginine 137 lines the N(2)-acetyl-L-ornithine pocket. 219-222 (DEVQ) is a binding site for pyridoxal 5'-phosphate. Lysine 248 carries the post-translational modification N6-(pyridoxal phosphate)lysine. Position 276 (threonine 276) interacts with pyridoxal 5'-phosphate.

The protein belongs to the class-III pyridoxal-phosphate-dependent aminotransferase family. ArgD subfamily. Homodimer. The cofactor is pyridoxal 5'-phosphate.

The protein localises to the cytoplasm. The catalysed reaction is N(2)-acetyl-L-ornithine + 2-oxoglutarate = N-acetyl-L-glutamate 5-semialdehyde + L-glutamate. It functions in the pathway amino-acid biosynthesis; L-arginine biosynthesis; N(2)-acetyl-L-ornithine from L-glutamate: step 4/4. The protein is Acetylornithine aminotransferase 2 of Bordetella pertussis (strain Tohama I / ATCC BAA-589 / NCTC 13251).